Here is a 361-residue protein sequence, read N- to C-terminus: D-alanine--D-alanine ligase (361 aa).

Residues Lys-144 to Arg-350 enclose the ATP-grasp domain. Val-177–Glu-232 lines the ATP pocket. Mg(2+)-binding residues include Asp-303, Glu-317, and Asn-319.

This sequence belongs to the D-alanine--D-alanine ligase family. Mg(2+) serves as cofactor. It depends on Mn(2+) as a cofactor.

Its subcellular location is the cytoplasm. The catalysed reaction is 2 D-alanine + ATP = D-alanyl-D-alanine + ADP + phosphate + H(+). Its pathway is cell wall biogenesis; peptidoglycan biosynthesis. Cell wall formation. This chain is D-alanine--D-alanine ligase, found in Chlorobium luteolum (strain DSM 273 / BCRC 81028 / 2530) (Pelodictyon luteolum).